The following is a 437-amino-acid chain: RNA-binding motif, single-stranded-interacting protein 3 (437 aa).

Residues 28 to 57 (YAPAPHPMAPPSPSTNSSSNNSSNNSSGEQ) form a disordered region. Positions 31–40 (APHPMAPPSP) are enriched in pro residues. Over residues 41–54 (STNSSSNNSSNNSS) the composition is skewed to low complexity. 2 RRM domains span residues 61-134 (TNLY…MAKQ) and 140-225 (TNLY…FADG). The segment covering 399–422 (TSPQTVAPSSQDTSGQQQQIAVDT) has biased composition (polar residues). The segment at 399–437 (TSPQTVAPSSQDTSGQQQQIAVDTSNEHAPAYSYQQSKP) is disordered.

In terms of tissue distribution, expressed in fetal brain, fetal lung, fetal liver, heart, brain, placenta, lung, liver, muscle, kidney and pancreas.

Its subcellular location is the cytoplasm. Binds poly(A) and poly(U) oligoribonucleotides. This is RNA-binding motif, single-stranded-interacting protein 3 (RBMS3) from Homo sapiens (Human).